The sequence spans 1060 residues: Beta-galactosidase (1060 aa).

Asn110 and Asp209 together coordinate substrate. Na(+) is bound at residue Asp209. Mg(2+) is bound by residues Glu432, His434, and Glu477. Residues Glu477 and 553-556 (EYAH) each bind substrate. The active-site Proton donor is Glu477. The Nucleophile role is filled by Glu553. Residue Asn613 coordinates Mg(2+). Positions 617 and 620 each coordinate Na(+). Residues Asn620 and Trp1035 each contribute to the substrate site.

It belongs to the glycosyl hydrolase 2 family. In terms of assembly, homotetramer. The cofactor is Mg(2+). Na(+) is required as a cofactor.

The catalysed reaction is Hydrolysis of terminal non-reducing beta-D-galactose residues in beta-D-galactosides.. In Yersinia pestis bv. Antiqua (strain Antiqua), this protein is Beta-galactosidase.